The sequence spans 515 residues: Tripartite motif-containing protein 5 (515 aa).

Residue Ala2 is modified to N-acetylalanine. The segment at 15 to 60 (CPICLELLTEPLSLPCGHSFCQACITANHKESMLYKEEERSCPVCR) adopts an RING-type zinc-finger fold. Ser87 carries the post-translational modification Phosphoserine. The B box-type zinc-finger motif lies at 92–133 (QKVDHCARHGEKLLLFCQEDSKVICWLCERSQEHRGHHTFLM). Zn(2+)-binding residues include Cys97, His100, Cys119, and His125. Residues 137–225 (AQEYHVKLQT…LTKSETEMVQ (89 aa)) adopt a coiled-coil conformation. A required for interaction with GABARAP and for autophagy region spans residues 187–200 (FEQLREILDWEESN). The 233-residue stretch at 283–515 (LKGMLDMFRE…VPMTLCSPSS (233 aa)) folds into the B30.2/SPRY domain.

The protein belongs to the TRIM/RBCC family. As to quaternary structure, can form homodimers and homotrimers. In addition to lower-order dimerization, also exhibits a higher-order multimerization and both low- and high-order multimerizations are essential for its restriction activity. Interacts with BTBD1 and BTBD2. Interacts with PSMC4, PSMC5, PSMD7 and HSPA8/HSC70. Interacts (via B30.2/SPRY domain) with HSPA1A/B. Interacts with PSMC2, MAP3K7/TAK1, TAB2 and TAB3. Interacts with SQSTM1. Interacts with TRIM6 and TRIM34. Interacts with ULK1 (phosphorylated form), GABARAP, GABARAPL1, GABARAPL2, MAP1LC3A, MAP1LC3C and BECN1. Post-translationally, degraded in a proteasome-independent fashion in the absence of viral infection but in a proteasome-dependent fashion following exposure to restriction sensitive virus. Autoubiquitinated in a RING finger- and UBE2D2-dependent manner. Monoubiquitinated by TRIM21. Deubiquitinated by Yersinia YopJ. Ubiquitination may not lead to proteasomal degradation.

The protein resides in the cytoplasm. Its subcellular location is the nucleus. It catalyses the reaction S-ubiquitinyl-[E2 ubiquitin-conjugating enzyme]-L-cysteine + [acceptor protein]-L-lysine = [E2 ubiquitin-conjugating enzyme]-L-cysteine + N(6)-ubiquitinyl-[acceptor protein]-L-lysine.. Its pathway is protein modification; protein ubiquitination. Its function is as follows. Capsid-specific restriction factor that prevents infection from non-host-adapted retroviruses. Blocks viral replication early in the life cycle, after viral entry but before reverse transcription. In addition to acting as a capsid-specific restriction factor, also acts as a pattern recognition receptor that activates innate immune signaling in response to the retroviral capsid lattice. Binding to the viral capsid triggers its E3 ubiquitin ligase activity, and in concert with the heterodimeric ubiquitin conjugating enzyme complex UBE2V1-UBE2N (also known as UBC13-UEV1A complex) generates 'Lys-63'-linked polyubiquitin chains, which in turn are catalysts in the autophosphorylation of the MAP3K7/TAK1 complex (includes TAK1, TAB2, and TAB3). Activation of the MAP3K7/TAK1 complex by autophosphorylation results in the induction and expression of NF-kappa-B and MAPK-responsive inflammatory genes, thereby leading to an innate immune response in the infected cell. Plays a role in regulating autophagy through activation of autophagy regulator BECN1 by causing its dissociation from its inhibitors BCL2 and TAB2. The sequence is that of Tripartite motif-containing protein 5 (TRIM5) from Chlorocebus aethiops (Green monkey).